A 257-amino-acid polypeptide reads, in one-letter code: Dihydroorotate dehydrogenase B (NAD(+)), electron transfer subunit (257 aa).

The 101-residue stretch at 2 to 102 (IGRERMTVAS…LGPLGNGFPL (101 aa)) folds into the FAD-binding FR-type domain. FAD is bound by residues 53 to 56 (RPLS), 70 to 72 (IYR), and 77 to 78 (GT). The [2Fe-2S] cluster site is built by C221, C226, C229, and C244.

The protein belongs to the PyrK family. In terms of assembly, heterotetramer of 2 PyrK and 2 PyrD type B subunits. Requires [2Fe-2S] cluster as cofactor. The cofactor is FAD.

Its pathway is pyrimidine metabolism; UMP biosynthesis via de novo pathway; orotate from (S)-dihydroorotate (NAD(+) route): step 1/1. In terms of biological role, responsible for channeling the electrons from the oxidation of dihydroorotate from the FMN redox center in the PyrD type B subunit to the ultimate electron acceptor NAD(+). In Geobacillus kaustophilus (strain HTA426), this protein is Dihydroorotate dehydrogenase B (NAD(+)), electron transfer subunit.